A 241-amino-acid polypeptide reads, in one-letter code: Triosephosphate isomerase (241 aa).

9–11 contributes to the substrate binding site; sequence NWK. The active-site Electrophile is the histidine 96. The active-site Proton acceptor is the glutamate 165. Residues glycine 171, serine 204, and 225–226 contribute to the substrate site; that span reads GG.

It belongs to the triosephosphate isomerase family. As to quaternary structure, homodimer.

Its subcellular location is the cytoplasm. It carries out the reaction D-glyceraldehyde 3-phosphate = dihydroxyacetone phosphate. Its pathway is carbohydrate biosynthesis; gluconeogenesis. The protein operates within carbohydrate degradation; glycolysis; D-glyceraldehyde 3-phosphate from glycerone phosphate: step 1/1. Its function is as follows. Involved in the gluconeogenesis. Catalyzes stereospecifically the conversion of dihydroxyacetone phosphate (DHAP) to D-glyceraldehyde-3-phosphate (G3P). In Trichormus variabilis (strain ATCC 29413 / PCC 7937) (Anabaena variabilis), this protein is Triosephosphate isomerase.